A 359-amino-acid chain; its full sequence is AA9 family lytic polysaccharide monooxygenase C (359 aa).

Positions 1–16 (MKTGSILAALVASASA) are cleaved as a signal peptide. 2 residues coordinate Cu(2+): H17 and H99. 2 cysteine pairs are disulfide-bonded: C55–C185 and C155–C243. H171 and Q180 together coordinate O2. A Cu(2+)-binding site is contributed by Y182. N-linked (GlcNAc...) asparagine glycans are attached at residues N189 and N284. Positions 244–320 (PAGGSGGSSP…NPQPTNGGNS (77 aa)) are disordered. Residues 251–296 (SSPAPATTASTPKPTSASAPKPVSTTASTPKPTNGSGSGTGAAHST) show a composition bias toward low complexity. Positions 307 to 319 (TKASNPQPTNGGN) are enriched in polar residues. One can recognise a CBM1 domain in the interval 323–358 (RAAALYGQCGGKGWTGPTSCASGTCKFSNDWYSQCL).

The protein belongs to the polysaccharide monooxygenase AA9 family. Cu(2+) serves as cofactor.

The protein localises to the secreted. The catalysed reaction is [(1-&gt;4)-beta-D-glucosyl]n+m + reduced acceptor + O2 = 4-dehydro-beta-D-glucosyl-[(1-&gt;4)-beta-D-glucosyl]n-1 + [(1-&gt;4)-beta-D-glucosyl]m + acceptor + H2O.. Activity in inhibited by excessive amounts of H(2)O(2). Functionally, lytic polysaccharide monooxygenase (LPMO) that depolymerizes crystalline and amorphous polysaccharides via the oxidation of scissile alpha- or beta-(1-4)-glycosidic bonds, yielding C4 oxidation products. Catalysis by LPMOs requires the reduction of the active-site copper from Cu(II) to Cu(I) by a reducing agent and H(2)O(2) or O(2) as a cosubstrate. Degrades various hemicelluloses, in particular xyloglucan. Active on tamarind xyloglucan and konjac glucomannan. Acts on the glucose backbone of xyloglucan, accepting various substitutions (xylose, galactose) in almost allpositions. In contrast to all previously characterized LPMOs, which are active only on polysaccharides, is able to cleave soluble cello-oligosaccharides as short as a tetramer. The cello-oligosaccharide products released by this enzyme contain a C4 gemdiol/keto group at the non-reducing end. Binds to the inner wood cell wall layer and consumes enzymatically generated H(2)O(2). This is AA9 family lytic polysaccharide monooxygenase C (gh61-3) from Neurospora crassa (strain ATCC 24698 / 74-OR23-1A / CBS 708.71 / DSM 1257 / FGSC 987).